We begin with the raw amino-acid sequence, 22 residues long: Polydim-I (22 aa).

Expressed by the venom gland.

It is found in the secreted. Antibacterial peptide. Acts on the Mycobacterium abscessus subsp. massiliense cell wall. Reduces 40-50% of the bacterial load in macrophages infected with different M.abscessus strains. Is not cytotoxic towards mammalian cells, and shows no hemolytic activity against human erythrocytes. In vivo, reduces the bacterial load in the lungs, spleen, and liver of highly susceptible mice intravenously infected with M.abscessus. In Polybia dimorpha (Neotropical wasp), this protein is Polydim-I.